A 320-amino-acid polypeptide reads, in one-letter code: Cytosolic Fe-S cluster assembly factor NUBP1 (320 aa).

An N-acetylmethionine modification is found at Met-1. Positions 8, 22, 25, and 31 each coordinate [4Fe-4S] cluster. 62-69 (GKGGVGKS) serves as a coordination point for ATP. [4Fe-4S] cluster contacts are provided by Cys-235 and Cys-238. Residue Ser-319 is modified to Phosphoserine.

This sequence belongs to the Mrp/NBP35 ATP-binding proteins family. NUBP1/NBP35 subfamily. In terms of assembly, heterotetramer of 2 NUBP1 and 2 NUBP2 chains. Interacts with KIFC1. Interacts with the BBS/CCT complex subunit CCT1. Requires [4Fe-4S] cluster as cofactor.

The protein localises to the cytoplasm. It localises to the nucleus. The protein resides in the cell projection. It is found in the cytoskeleton. Its subcellular location is the cilium axoneme. The protein localises to the cilium basal body. It localises to the microtubule organizing center. The protein resides in the centrosome. It is found in the centriole. Functionally, component of the cytosolic iron-sulfur (Fe/S) protein assembly (CIA) machinery. Required for maturation of extramitochondrial Fe-S proteins. The NUBP1-NUBP2 heterotetramer forms a Fe-S scaffold complex, mediating the de novo assembly of an Fe-S cluster and its transfer to target apoproteins. Implicated in the regulation of centrosome duplication. Negatively regulates cilium formation and structure. The sequence is that of Cytosolic Fe-S cluster assembly factor NUBP1 from Rattus norvegicus (Rat).